Consider the following 277-residue polypeptide: NADPH-dependent 7-cyano-7-deazaguanine reductase (277 aa).

Substrate is bound at residue 83-85; sequence VES. Residue 85 to 86 participates in NADPH binding; it reads SK. The active-site Thioimide intermediate is the Cys-184. Asp-191 acts as the Proton donor in catalysis. Residue 223 to 224 coordinates substrate; the sequence is HE. 252–253 contacts NADPH; it reads RG.

It belongs to the GTP cyclohydrolase I family. QueF type 2 subfamily. In terms of assembly, homodimer.

Its subcellular location is the cytoplasm. The catalysed reaction is 7-aminomethyl-7-carbaguanine + 2 NADP(+) = 7-cyano-7-deazaguanine + 2 NADPH + 3 H(+). Its pathway is tRNA modification; tRNA-queuosine biosynthesis. Catalyzes the NADPH-dependent reduction of 7-cyano-7-deazaguanine (preQ0) to 7-aminomethyl-7-deazaguanine (preQ1). The chain is NADPH-dependent 7-cyano-7-deazaguanine reductase from Ralstonia nicotianae (strain ATCC BAA-1114 / GMI1000) (Ralstonia solanacearum).